Consider the following 506-residue polypeptide: MADITTEQQGEWLLEMKNISKSFPGVKALDNVNLNVRPHSIHALMGENGAGKSTLLKCLFGIYSKDAGSIIFQGQEVNFKNSKEALEQGVSMVHQELNLVLQRTVMDNMWLGRYPRKGMFVDHKKMYQDTKTIFDELDIDIDPRDKGATLSVSQMQIIEIAKAFSYDAKIVIMDEPTSSLTEKEVNHLFSIIRKLKARGCGIVYISHKMEEIFQLCDEITILRDGQWIATQPVEGLSMDQIIAMMVGRSLSQHFPDRISEPGEVMLEVRNLTSLRQPSIRDISFDLHQGEILGIAGLVGARRTDIVETLFGIREKSAGTIRLHGKNIKNSSANEAISHGFALVTEERRATGIYAFLDVGFNSLISNIRSYKNKMGLLNNTRMKSDIQWVINAMRVKTPGHSAHIGSLSGGNQQKVIIGRWLLTQPEILMLDEPTRGIDVGAKFEIYQLMTELAKRGKGIIIISSEMPELLGITDRILVMSNGQMVGMVNTKETSQNEILRLASLYL.

ABC transporter domains follow at residues 14–249 (LEMK…VGRS) and 264–506 (VMLE…SLYL). Residue 46-53 (GENGAGKS) participates in ATP binding.

This sequence belongs to the ABC transporter superfamily. Galactose/methyl galactoside importer (TC 3.A.1.2.3) family. In terms of assembly, the complex is composed of one ATP-binding protein (MglA), two transmembrane proteins (MglC) and a solute-binding protein (MglB).

It is found in the cell inner membrane. It carries out the reaction D-galactose(out) + ATP + H2O = D-galactose(in) + ADP + phosphate + H(+). It catalyses the reaction methyl beta-D-galactoside(out) + ATP + H2O = methyl beta-D-galactoside(in) + ADP + phosphate + H(+). In terms of biological role, part of the ABC transporter complex MglABC involved in galactose/methyl galactoside import. Responsible for energy coupling to the transport system. This is Galactose/methyl galactoside import ATP-binding protein MglA from Sodalis glossinidius (strain morsitans).